Reading from the N-terminus, the 748-residue chain is Photosystem I P700 chlorophyll a apoprotein A1 (748 aa).

A run of 8 helical transmembrane segments spans residues 70-93, 156-179, 195-219, 291-309, 346-369, 385-411, 433-455, and 530-548; these read VFSA…FHGA, LYTT…FHYH, LNHH…HVSM, TAHH…GHMY, WHAQ…HHMY, LSLF…IFMV, AIIS…LYIH, and FLVH…LILL. [4Fe-4S] cluster is bound by residues cysteine 572 and cysteine 581. The next 2 membrane-spanning stretches (helical) occupy residues 588–609 and 662–684; these read HIFL…HFSW and LSAY…MFLF. Residue histidine 673 participates in chlorophyll a' binding. Chlorophyll a contacts are provided by methionine 681 and tyrosine 689. Tryptophan 690 serves as a coordination point for phylloquinone. The chain crosses the membrane as a helical span at residues 722 to 742; it reads AVGVAHYLLGGIATTWAFFLA.

This sequence belongs to the PsaA/PsaB family. In terms of assembly, the PsaA/B heterodimer binds the P700 chlorophyll special pair and subsequent electron acceptors. PSI consists of a core antenna complex that captures photons, and an electron transfer chain that converts photonic excitation into a charge separation. The eukaryotic PSI reaction center is composed of at least 11 subunits. It depends on P700 is a chlorophyll a/chlorophyll a' dimer, A0 is one or more chlorophyll a, A1 is one or both phylloquinones and FX is a shared 4Fe-4S iron-sulfur center. as a cofactor.

The protein localises to the plastid. Its subcellular location is the chloroplast thylakoid membrane. The enzyme catalyses reduced [plastocyanin] + hnu + oxidized [2Fe-2S]-[ferredoxin] = oxidized [plastocyanin] + reduced [2Fe-2S]-[ferredoxin]. In terms of biological role, psaA and PsaB bind P700, the primary electron donor of photosystem I (PSI), as well as the electron acceptors A0, A1 and FX. PSI is a plastocyanin-ferredoxin oxidoreductase, converting photonic excitation into a charge separation, which transfers an electron from the donor P700 chlorophyll pair to the spectroscopically characterized acceptors A0, A1, FX, FA and FB in turn. Oxidized P700 is reduced on the lumenal side of the thylakoid membrane by plastocyanin. The protein is Photosystem I P700 chlorophyll a apoprotein A1 of Chara vulgaris (Common stonewort).